Here is a 97-residue protein sequence, read N- to C-terminus: Mapk-regulated corepressor-interacting protein 1 (97 aa).

2 disordered regions span residues 1–29 (MTSS…NEIF) and 72–97 (SNSL…PKKS). The span at 17–28 (ASNTRSPSSNEI) shows a compositional bias: polar residues. The segment covering 82-97 (DLNDLKRRTVQDPKKS) has biased composition (basic and acidic residues).

Belongs to the MCRIP family.

It localises to the nucleus. The protein resides in the cytoplasm. Its subcellular location is the stress granule. Functionally, may play a role in the regulation of the epithelial-mesenchymal transition. The chain is Mapk-regulated corepressor-interacting protein 1 (Mcrip1) from Xenopus tropicalis (Western clawed frog).